The following is a 382-amino-acid chain: MRLSTNPTLDRFDAVPAASYRPGHGAVRAWLYLLAVLVVAMVAVGGATRLTGSGLSITEWRPVTGVVPPLDAADWAVEFDKYRDTPQYRILNQGIGLDGFKTLYWWEWGHRLLGRIVGLVFFLPFAWFWARGMLGRRLLTGLLGLGLLGGLQGAIGWIMVASGLQPGMTAVAPLKLALHLTTASLILAGLVWLAAGTRPRALAPAPESVRVVACLLPALVLVQIWLGGLVAGSKAGLLYNTWPDMDGVLVPPARVLFDKVPFIENFIDNLALVQFNHRLFAYLVVAVAIAHAIQAARTASGSAAAGRAMGVAALATAQMGLGIATLLLHVPLWAGLAHQVFAMAVLIMATVHARLARGVPAAAAPTGAEVPIGLEALAGRGA.

The next 8 helical transmembrane spans lie at Gly-25–Gly-45, Leu-112–Gly-132, Gly-141–Ala-161, Leu-176–Gly-196, Val-211–Ala-231, Leu-270–Ala-290, Ala-303–Ile-323, and Leu-327–Ile-347. His-277 is a binding site for heme. His-338 contributes to the heme binding site.

This sequence belongs to the COX15/CtaA family. Type 2 subfamily. Interacts with CtaB. It depends on heme b as a cofactor.

The protein localises to the cell membrane. It carries out the reaction Fe(II)-heme o + 2 A + H2O = Fe(II)-heme a + 2 AH2. It functions in the pathway porphyrin-containing compound metabolism; heme A biosynthesis; heme A from heme O: step 1/1. Catalyzes the conversion of heme O to heme A by two successive hydroxylations of the methyl group at C8. The first hydroxylation forms heme I, the second hydroxylation results in an unstable dihydroxymethyl group, which spontaneously dehydrates, resulting in the formyl group of heme A. This is Heme A synthase from Methylorubrum extorquens (strain CM4 / NCIMB 13688) (Methylobacterium extorquens).